A 156-amino-acid polypeptide reads, in one-letter code: Ribonuclease pancreatic (156 aa).

Positions 1–28 (MALEKSLVLLPLLVLALLVLGWIQPSLG) are cleaved as a signal peptide. K35 and R38 together coordinate substrate. H40 serves as the catalytic Proton acceptor. 4 disulfide bridges follow: C54–C112, C68–C123, C86–C138, and C93–C100. N62 carries N-linked (GlcNAc...) asparagine glycosylation. Residue 69–73 (KPVNT) participates in substrate binding. Residue N90 is glycosylated (N-linked (GlcNAc...) asparagine). K94 serves as a coordination point for substrate. N-linked (GlcNAc...) asparagine glycosylation occurs at N104. Position 113 (R113) interacts with substrate. The active-site Proton donor is the H147.

It belongs to the pancreatic ribonuclease family. In terms of assembly, monomer. Interacts with and forms tight 1:1 complexes with RNH1. Dimerization of two such complexes may occur. Interaction with RNH1 inhibits this protein.

The protein localises to the secreted. It carries out the reaction an [RNA] containing cytidine + H2O = an [RNA]-3'-cytidine-3'-phosphate + a 5'-hydroxy-ribonucleotide-3'-[RNA].. It catalyses the reaction an [RNA] containing uridine + H2O = an [RNA]-3'-uridine-3'-phosphate + a 5'-hydroxy-ribonucleotide-3'-[RNA].. Functionally, endonuclease that catalyzes the cleavage of RNA on the 3' side of pyrimidine nucleotides. Acts on single-stranded and double-stranded RNA. The chain is Ribonuclease pancreatic (RNASE1) from Lemur catta (Ring-tailed lemur).